The chain runs to 143 residues: MSPSESAKKNEKISEEATVESKAFSISVEKQTPDLDGLIVEELCMGNPNGKKAEPGKRVSVHYTGKLQGNGKIFDSTVGKSRYKFRLDAGKVIKGLDVGLNGMLVGGKRKLTIPPEMGYGAEGAGSIPPDSWLVFDVELLNVK.

The region spanning 56 to 143 (GKRVSVHYTG…VFDVELLNVK (88 aa)) is the PPIase FKBP-type domain.

This sequence belongs to the FKBP-type PPIase family.

It carries out the reaction [protein]-peptidylproline (omega=180) = [protein]-peptidylproline (omega=0). PPIases accelerate the folding of proteins. It catalyzes the cis-trans isomerization of proline imidic peptide bonds in oligopeptides. The protein is Peptidyl-prolyl cis-trans isomerase FKBP15-3 (FKBP15-3) of Arabidopsis thaliana (Mouse-ear cress).